A 342-amino-acid chain; its full sequence is Phosphate acyltransferase (342 aa).

The protein belongs to the PlsX family. Homodimer. Probably interacts with PlsY.

The protein localises to the cytoplasm. The catalysed reaction is a fatty acyl-[ACP] + phosphate = an acyl phosphate + holo-[ACP]. Its pathway is lipid metabolism; phospholipid metabolism. Its function is as follows. Catalyzes the reversible formation of acyl-phosphate (acyl-PO(4)) from acyl-[acyl-carrier-protein] (acyl-ACP). This enzyme utilizes acyl-ACP as fatty acyl donor, but not acyl-CoA. The polypeptide is Phosphate acyltransferase (Shewanella sp. (strain MR-4)).